The primary structure comprises 394 residues: Aspergillopepsin-1 (394 aa).

An N-terminal signal peptide occupies residues 1 to 20; that stretch reads MVVFSKTAALVLGLSTAVSA. The propeptide at 21–69 is activation peptide; it reads APAPTRKGFTINQIARPANKTRTVNLPGLYARSLAKFGGTVPQSVKEAA. A Peptidase A1 domain is found at 85-391; that stretch reads YLTPVTVGKS…NSEGPKLGFA (307 aa). Catalysis depends on residues Asp-101 and Asp-283. A disulfide bridge links Cys-319 with Cys-354.

It belongs to the peptidase A1 family.

The protein resides in the secreted. It catalyses the reaction Hydrolysis of proteins with broad specificity. Generally favors hydrophobic residues in P1 and P1', but also accepts Lys in P1, which leads to activation of trypsinogen. Does not clot milk.. Its function is as follows. Secreted aspartic endopeptidase that allows assimilation of proteinaceous substrates. The scissile peptide bond is attacked by a nucleophilic water molecule activated by two aspartic residues in the active site. Shows a broad primary substrate specificity. Favors hydrophobic residues at the P1 and P1' positions, but also accepts a lysine residue in the P1 position, leading to the activation of trypsinogen and chymotrypsinogen A. This chain is Aspergillopepsin-1, found in Aspergillus niger.